A 156-amino-acid polypeptide reads, in one-letter code: MPRRRVVAAREILPDPKFSSQTIAKFMNHVMQDGKKSVAEGIVYGALERVQEKNKVDPVEFFEATLEKVRPMVEVKARRVGGATYQVPMEVRPSRRTALAMRWLVDAAAKRSEKTMALRLAGELLDAAEGKGAAIKKREDVHRMAEANKAFSHYRF.

It belongs to the universal ribosomal protein uS7 family. As to quaternary structure, part of the 30S ribosomal subunit. Contacts proteins S9 and S11.

Its function is as follows. One of the primary rRNA binding proteins, it binds directly to 16S rRNA where it nucleates assembly of the head domain of the 30S subunit. Is located at the subunit interface close to the decoding center, probably blocks exit of the E-site tRNA. The polypeptide is Small ribosomal subunit protein uS7 (Acinetobacter baylyi (strain ATCC 33305 / BD413 / ADP1)).